Reading from the N-terminus, the 112-residue chain is Cytochrome c2 (112 aa).

Residues cysteine 14, cysteine 17, histidine 18, and methionine 91 each contribute to the heme c site.

This sequence belongs to the cytochrome c family. In terms of processing, binds 1 heme c group covalently per subunit.

In terms of biological role, cytochrome c2 is found mainly in purple, non-sulfur, photosynthetic bacteria where it functions as the electron donor to the oxidized bacteriochlorophyll in the photophosphorylation pathway. However, it may also have a role in the respiratory chain and is found in some non-photosynthetic bacteria. The chain is Cytochrome c2 (cycA) from Rhodospirillum rubrum.